Consider the following 291-residue polypeptide: UDP-N-acetylenolpyruvoylglucosamine reductase (291 aa).

The FAD-binding PCMH-type domain occupies 22 to 187 (RIGGPARYFK…ASATFQLTKD (166 aa)). Arginine 166 is an active-site residue. Cysteine 214 acts as the Proton donor in catalysis. Glutamate 283 is an active-site residue.

This sequence belongs to the MurB family. The cofactor is FAD.

It is found in the cytoplasm. It carries out the reaction UDP-N-acetyl-alpha-D-muramate + NADP(+) = UDP-N-acetyl-3-O-(1-carboxyvinyl)-alpha-D-glucosamine + NADPH + H(+). The protein operates within cell wall biogenesis; peptidoglycan biosynthesis. Its function is as follows. Cell wall formation. The polypeptide is UDP-N-acetylenolpyruvoylglucosamine reductase (Chlamydia trachomatis serovar A (strain ATCC VR-571B / DSM 19440 / HAR-13)).